A 165-amino-acid polypeptide reads, in one-letter code: Endoribonuclease YbeY (165 aa).

Zn(2+) is bound by residues His-130, His-134, and His-140.

The protein belongs to the endoribonuclease YbeY family. Zn(2+) serves as cofactor.

Its subcellular location is the cytoplasm. Single strand-specific metallo-endoribonuclease involved in late-stage 70S ribosome quality control and in maturation of the 3' terminus of the 16S rRNA. The polypeptide is Endoribonuclease YbeY (Streptococcus pneumoniae serotype 4 (strain ATCC BAA-334 / TIGR4)).